The sequence spans 626 residues: MADQRMDISSTISDFMSPGPTDLLSSSLGTSGVDCNRKRKGSATDYQESMDTDKDDPHGRLEYAEHQGRIKNAREAHSQIEKRRRDKMNSFIDELASLVPTCNAMSRKLDKLTVLRMAVQHMKTLRGATNPYTEANYKPTFLSDDELKHLILRAADGFLFVVGCDRGKILFVSESVFKILNYSQNDLIGQSLFDYLHPKDIAKVKEQLSSSDTAPRERLIDAKTGLPVKTDITPGPSRLCSGARRSFFCRMKCNRPSVKVEDKDFASTCSKKKADRKSFCTIHSTGYLKSWPPTKMGLDEDNEPDNEGCNLSCLVAIGRLHSHVVPQPVNGEIRVKSMEYVSRHAIDGKFVFVDQRATAILAYLPQELLGTSCYEYFHQDDIGHLAECHRQVLQTREKITTNCYKFKIKDGSFITLRSRWFSFMNPWTKEVEYIVSTNTVVLANVLEGGDPTFPQLTASPHSMDSMLPSGEGGPKRTHPTVPGIPGGTRAGAGKIGRMIAEEIMEIHRIRGSSPSSCGSSPLNITSTPPPDASSPGGKKILNGGTPDIPSTGLLPGQAQETPGYPYSDSSSILGENPHIGIDMIDNDQGSSSPSNDEAAMAVIMSLLEADAGLGGPVDFSDLPWPL.

The segment at 1 to 58 (MADQRMDISSTISDFMSPGPTDLLSSSLGTSGVDCNRKRKGSATDYQESMDTDKDDPH) is disordered. Serine 17 bears the Phosphoserine; by GSK3-beta mark. Over residues 17–32 (SPGPTDLLSSSLGTSG) the composition is skewed to low complexity. Position 21 is a phosphothreonine; by GSK3-beta (threonine 21). A Nuclear localization signal motif is present at residues 36–41 (NRKRKG). Residues 72 to 125 (NAREAHSQIEKRRRDKMNSFIDELASLVPTCNAMSRKLDKLTVLRMAVQHMKTL) enclose the bHLH domain. The residue at position 78 (serine 78) is a Phosphoserine. At serine 90 the chain carries Phosphoserine; by CK2. The Nuclear export signal 1 motif lies at 142 to 152 (LSDDELKHLIL). The PAS 1 domain maps to 143-215 (SDDELKHLIL…EQLSSSDTAP (73 aa)). A Glycyl lysine isopeptide (Lys-Gly) (interchain with G-Cter in SUMO2 and SUMO3) cross-link involves residue lysine 252. Lysine 259 participates in a covalent cross-link: Glycyl lysine isopeptide (Lys-Gly) (interchain with G-Cter in SUMO); alternate. Lysine 259 is covalently cross-linked (Glycyl lysine isopeptide (Lys-Gly) (interchain with G-Cter in SUMO2); alternate). The 71-residue stretch at 326–396 (PQPVNGEIRV…ECHRQVLQTR (71 aa)) folds into the PAS 2 domain. A Nuclear export signal 2 motif is present at residues 361 to 369 (LAYLPQELL). A PAC domain is found at 401-444 (TNCYKFKIKDGSFITLRSRWFSFMNPWTKEVEYIVSTNTVVLAN). Disordered stretches follow at residues 459 to 492 (SPHS…RAGA) and 511 to 595 (GSSP…SPSN). The interval 508–588 (RIRGSSPSSC…IGIDMIDNDQ (81 aa)) is interaction with CIART. Over residues 511-521 (GSSPSSCGSSP) the composition is skewed to low complexity. Lysine 538 carries the post-translational modification N6-acetyllysine.

As to quaternary structure, component of the circadian clock oscillator which includes the CRY1/2 proteins, CLOCK or NPAS2, BMAL1 or BMAL2, CSNK1D and/or CSNK1E, TIMELESS and the PER1/2/3 proteins. Forms a heterodimer with CLOCK. The CLOCK-BMAL1 heterodimer is required for E-box-dependent transactivation, for CLOCK nuclear translocation and degradation, and, for phosphorylation of both CLOCK and BMAL1. Part of a nuclear complex which also includes RACK1 and PRKCA; RACK1 and PRKCA are recruited to the complex in a circadian manner. Interacts with NPAS2. Interacts with EZH2. Interacts with SUMO3. Interacts with SIRT1. Interacts with AHR. Interacts with ID1, ID2 and ID3. Interacts with DDX4. Interacts with OGT. Interacts with EED and SUZ12. Interacts with MTA1. Interacts with CIART. Interacts with HSP90. Interacts with KAT2B and EP300. Interacts with BHLHE40/DEC1 and BHLHE41/DEC2. Interacts with RELB and the interaction is enhanced in the presence of CLOCK. Interacts with PER1, PER2, CRY1 and CRY2 and this interaction requires a translocation to the nucleus. Interaction of the CLOCK-BMAL1 heterodimer with PER or CRY inhibits transcription activation. Interaction of the CLOCK-BMAL1 with CRY1 is independent of DNA but with PER2 is off DNA. The CLOCK-BMAL1 heterodimer interacts with GSK3B. Interacts with KDM5A. Interacts with KMT2A; in a circadian manner. Interacts with UBE3A. Interacts with PRKCG. Interacts with MAGEL2. Interacts with NCOA2. Interacts with THRAP3. The CLOCK-BMAL1 heterodimer interacts with PASD1. Interacts with PASD1. Interacts with USP9X. Interacts with PIWIL2 (via PIWI domain). Interacts with HDAC3. Interacts with HNF4A. Post-translationally, ubiquitinated, leading to its proteasomal degradation. Deubiquitinated by USP9X. O-glycosylated; contains O-GlcNAc. O-glycosylation by OGT prevents protein degradation by inhibiting ubiquitination. It also stabilizes the CLOCK-BMAL1 heterodimer thereby increasing CLOCK-BMAL1-mediated transcription of genes in the negative loop of the circadian clock such as PER1/2/3 and CRY1/2. In terms of processing, acetylated on Lys-538 by CLOCK during the repression phase of the circadian cycle. Acetylation facilitates recruitment of CRY1 protein and initiates the repression phase of the circadian cycle. Acetylated at Lys-538 by KAT5 during the activation phase of the cycle, leading to recruitment of the positive transcription elongation factor b (P-TEFb) and BRD4, followed by productive elongation of circadian transcripts. Deacetylated by SIRT1, which may result in decreased protein stability. Post-translationally, phosphorylated upon dimerization with CLOCK. Phosphorylation enhances the transcriptional activity, alters the subcellular localization and decreases the stability of the CLOCK-BMAL1 heterodimer by promoting its degradation. Phosphorylation shows circadian variations in the liver with a peak between CT10 to CT14. Phosphorylation at Ser-90 by CK2 is essential for its nuclear localization, its interaction with CLOCK and controls CLOCK nuclear entry. Dephosphorylation at Ser-78 is important for dimerization with CLOCK and transcriptional activity. Sumoylated on Lys-259 upon dimerization with CLOCK. Predominantly conjugated to poly-SUMO2/3 rather than SUMO1 and the level of these conjugates undergo rhythmic variation, peaking at CT9-CT12. Sumoylation localizes it exclusively to the PML body and promotes its ubiquitination in the PML body, ubiquitin-dependent proteasomal degradation and the transcriptional activity of the CLOCK-BMAL1 heterodimer. In terms of processing, undergoes lysosome-mediated degradation in a time-dependent manner in the liver.

The protein resides in the nucleus. It localises to the cytoplasm. It is found in the PML body. Its function is as follows. Transcriptional activator which forms a core component of the circadian clock. The circadian clock, an internal time-keeping system, regulates various physiological processes through the generation of approximately 24 hour circadian rhythms in gene expression, which are translated into rhythms in metabolism and behavior. It is derived from the Latin roots 'circa' (about) and 'diem' (day) and acts as an important regulator of a wide array of physiological functions including metabolism, sleep, body temperature, blood pressure, endocrine, immune, cardiovascular, and renal function. Consists of two major components: the central clock, residing in the suprachiasmatic nucleus (SCN) of the brain, and the peripheral clocks that are present in nearly every tissue and organ system. Both the central and peripheral clocks can be reset by environmental cues, also known as Zeitgebers (German for 'timegivers'). The predominant Zeitgeber for the central clock is light, which is sensed by retina and signals directly to the SCN. The central clock entrains the peripheral clocks through neuronal and hormonal signals, body temperature and feeding-related cues, aligning all clocks with the external light/dark cycle. Circadian rhythms allow an organism to achieve temporal homeostasis with its environment at the molecular level by regulating gene expression to create a peak of protein expression once every 24 hours to control when a particular physiological process is most active with respect to the solar day. Transcription and translation of core clock components (CLOCK, NPAS2, BMAL1, BMAL2, PER1, PER2, PER3, CRY1 and CRY2) plays a critical role in rhythm generation, whereas delays imposed by post-translational modifications (PTMs) are important for determining the period (tau) of the rhythms (tau refers to the period of a rhythm and is the length, in time, of one complete cycle). A diurnal rhythm is synchronized with the day/night cycle, while the ultradian and infradian rhythms have a period shorter and longer than 24 hours, respectively. Disruptions in the circadian rhythms contribute to the pathology of cardiovascular diseases, cancer, metabolic syndromes and aging. A transcription/translation feedback loop (TTFL) forms the core of the molecular circadian clock mechanism. Transcription factors, CLOCK or NPAS2 and BMAL1 or BMAL2, form the positive limb of the feedback loop, act in the form of a heterodimer and activate the transcription of core clock genes and clock-controlled genes (involved in key metabolic processes), harboring E-box elements (5'-CACGTG-3') within their promoters. The core clock genes: PER1/2/3 and CRY1/2 which are transcriptional repressors form the negative limb of the feedback loop and interact with the CLOCK|NPAS2-BMAL1|BMAL2 heterodimer inhibiting its activity and thereby negatively regulating their own expression. This heterodimer also activates nuclear receptors NR1D1/2 and RORA/B/G, which form a second feedback loop and which activate and repress BMAL1 transcription, respectively. BMAL1 positively regulates myogenesis and negatively regulates adipogenesis via the transcriptional control of the genes of the canonical Wnt signaling pathway. Plays a role in normal pancreatic beta-cell function; regulates glucose-stimulated insulin secretion via the regulation of antioxidant genes NFE2L2/NRF2 and its targets SESN2, PRDX3, CCLC and CCLM. Negatively regulates the mTORC1 signaling pathway; regulates the expression of MTOR and DEPTOR. Controls diurnal oscillations of Ly6C inflammatory monocytes; rhythmic recruitment of the PRC2 complex imparts diurnal variation to chemokine expression that is necessary to sustain Ly6C monocyte rhythms. Regulates the expression of HSD3B2, STAR, PTGS2, CYP11A1, CYP19A1 and LHCGR in the ovary and also the genes involved in hair growth. Plays an important role in adult hippocampal neurogenesis by regulating the timely entry of neural stem/progenitor cells (NSPCs) into the cell cycle and the number of cell divisions that take place prior to cell-cycle exit. Regulates the circadian expression of CIART and KLF11. The CLOCK-BMAL1 heterodimer regulates the circadian expression of SERPINE1/PAI1, VWF, B3, CCRN4L/NOC, NAMPT, DBP, MYOD1, PPARGC1A, PPARGC1B, SIRT1, GYS2, F7, NGFR, GNRHR, BHLHE40/DEC1, ATF4, MTA1, KLF10 and also genes implicated in glucose and lipid metabolism. Promotes rhythmic chromatin opening, regulating the DNA accessibility of other transcription factors. The NPAS2-BMAL1 heterodimer positively regulates the expression of MAOA, F7 and LDHA and modulates the circadian rhythm of daytime contrast sensitivity by regulating the rhythmic expression of adenylate cyclase type 1 (ADCY1) in the retina. The preferred binding motif for the CLOCK-BMAL1 heterodimer is 5'-CACGTGA-3', which contains a flanking adenine nucleotide at the 3-prime end of the canonical 6-nucleotide E-box sequence. CLOCK specifically binds to the half-site 5'-CAC-3', while BMAL1 binds to the half-site 5'-GTGA-3'. The CLOCK-BMAL1 heterodimer also recognizes the non-canonical E-box motifs 5'-AACGTGA-3' and 5'-CATGTGA-3'. Essential for the rhythmic interaction of CLOCK with ASS1 and plays a critical role in positively regulating CLOCK-mediated acetylation of ASS1. Plays a role in protecting against lethal sepsis by limiting the expression of immune checkpoint protein CD274 in macrophages in a PKM2-dependent manner. Regulates the diurnal rhythms of skeletal muscle metabolism via transcriptional activation of genes promoting triglyceride synthesis (DGAT2) and metabolic efficiency (COQ10B). This is Basic helix-loop-helix ARNT-like protein 1 (BMAL1) from Mesocricetus auratus (Golden hamster).